Here is a 365-residue protein sequence, read N- to C-terminus: MAVASRKLGALVLVAVLCLSLPTGCLSSQQAAALFIFGDSVFDPGNNNHINTHVNFKANFWPYGQSYFSSPTGRFSDGRIIPDFIAEYASLPIIPAYLEPNNDFTHGANFASAGAGALIASHAGLAVGLQTQLRYFGDLVDHYRQNLGDIKSRQLLSDAVYLFSCGGNDYQSPYYPYTQEQYVDIVIGNMTNVIKGIYEKGGRKFGVVNVPLIGCWPGMRAKQPGNTCNTEVDELTRLHNQAFAKRLEQLEKQLEGFVYAKFDLSTAILNRMKNPSKYGFKEGESACCGSGPFGGNYDCGRIKEFGLCDNATEYFFFDPFHPNELASRQFAEMFWDGDSMVTQPYNLKALFEGKPSTKYLPNDEL.

Positions 1 to 27 (MAVASRKLGALVLVAVLCLSLPTGCLS) are cleaved as a signal peptide. The Nucleophile role is filled by S40. N-linked (GlcNAc...) asparagine glycosylation is found at N189 and N310. Active-site charge relay system residues include D318 and H321.

Belongs to the 'GDSL' lipolytic enzyme family. As to expression, restricted to the pericarp during achene maturation. Expressed in the leaves of mature plants and seedlings, as well as in buds and flowers. Present in disk florets.

Its subcellular location is the secreted. It is found in the extracellular space. The enzyme catalyses (Z,S)-pyrethrolone + (1R,3R)-chrysanthemoyl-CoA = pyrethrin I + CoA. It carries out the reaction (Z,S)-pyrethrolone + (1R,3R)-pyrethroyl-CoA = pyrethrin II + CoA. It catalyses the reaction (Z,S)-jasmololone + (1R,3R)-chrysanthemoyl-CoA = jasmolin I + CoA. The catalysed reaction is (Z,S)-cinerolone + (1R,3R)-chrysanthemoyl-CoA = cinerin I + CoA. The enzyme catalyses (Z,S)-jasmololone + (1R,3R)-pyrethroyl-CoA = jasmolin II + CoA. It carries out the reaction (Z,S)-cinerolone + (1R,3R)-pyrethroyl-CoA = cinerin II + CoA. It participates in isoprenoid biosynthesis. Its function is as follows. Component of the monoterpenoid pyrethrins biosynthesis; pyrethrins are widely used plant-derived pesticide. Acyltransferase that catalyzes the esterification of terpene acids and lipid alcohol substrates into pyrethrins; mediates the transfer of a chrysanthemoyl moiety from the coenzyme A (CoA) thio-ester chrysanthemoyl CoA to pyrethrolone, and, to a lower extent, to jasmololone and cinerolone thus producing pyrethrins (e.g. pyrethrin type I). Can also use pyrethroyl CoA as substrate. Also has esterase activity, being able to cleave the ester bond of pyrethrin I, p-nitrophenyl butanoate and p-nitrophenyl octanoate to produce pyrethrolone and p-nitrophenol, respectively. The polypeptide is GDSL lipase (Tanacetum cinerariifolium (Dalmatian daisy)).